Here is a 270-residue protein sequence, read N- to C-terminus: Cell surface glycoprotein CD200 receptor 4 (270 aa).

An N-terminal signal peptide occupies residues 1-25; sequence MHALGRIPTLTLLIFINIFVSGSSC. The Ig-like V-type domain occupies 26–145; the sequence is TDENQTIQND…GNLEKVYDLQ (120 aa). At 26–241 the chain is on the extracellular side; it reads TDENQTIQND…TMTTPRSLLT (216 aa). 2 N-linked (GlcNAc...) asparagine glycosylation sites follow: N29 and N44. 4 disulfide bridges follow: C58-C129, C82-C97, C164-C213, and C183-C201. The region spanning 134–229 is the Ig-like C2-type domain; the sequence is PEGNLEKVYD…GNQSLSIELS (96 aa). N-linked (GlcNAc...) asparagine glycosylation is present at N192. A helical membrane pass occupies residues 242 to 262; the sequence is ILYVKMALLVIILLNVGFAFF. The Cytoplasmic segment spans residues 263 to 270; that stretch reads QKRNFART.

It belongs to the CD200R family. Interacts with TYROBP. As to expression, highly expressed in monocytes, NK cells and a subset of NKT cells. Weakly expressed in granulocytes and B-cells (at protein level). Expressed in brain, lung, testis, thymus, intestine and uterus. Expressed in bone marrow derived-macrophage and dendritic cells and mast cells.

The protein localises to the membrane. In terms of biological role, involved in the recruitment or surface expression of the TYROBP receptor. The protein is Cell surface glycoprotein CD200 receptor 4 (Cd200r4) of Mus musculus (Mouse).